A 973-amino-acid chain; its full sequence is UvrABC system protein A (973 aa).

34–41 (GLSGSGKS) provides a ligand contact to ATP. 2 consecutive ABC transporter domains span residues 330 to 609 (WAKS…PNSI) and 629 to 958 (AKKN…QFLK). Residue 662-669 (GVSGGGKS) participates in ATP binding. Residues 761 to 787 (CEACQGDGVIKIEMHFLPDVYVTCDVC) form a C4-type zinc finger.

The protein belongs to the ABC transporter superfamily. UvrA family. Forms a heterotetramer with UvrB during the search for lesions.

It localises to the cytoplasm. Functionally, the UvrABC repair system catalyzes the recognition and processing of DNA lesions. UvrA is an ATPase and a DNA-binding protein. A damage recognition complex composed of 2 UvrA and 2 UvrB subunits scans DNA for abnormalities. When the presence of a lesion has been verified by UvrB, the UvrA molecules dissociate. The sequence is that of UvrABC system protein A from Mesorhizobium japonicum (strain LMG 29417 / CECT 9101 / MAFF 303099) (Mesorhizobium loti (strain MAFF 303099)).